Here is a 476-residue protein sequence, read N- to C-terminus: Siroheme synthase 1 (476 aa).

Positions 1 to 203 are precorrin-2 dehydrogenase /sirohydrochlorin ferrochelatase; it reads MDYLPIFADL…GQTAEAQRQL (203 aa). Residues 22–23 and 43–44 contribute to the NAD(+) site; these read EV and QS. Phosphoserine is present on Ser128. Positions 219 to 476 are uroporphyrinogen-III C-methyltransferase; sequence GEIALVGAGP…VSRPAVVNLA (258 aa). S-adenosyl-L-methionine is bound at residue Pro228. Asp251 acts as the Proton acceptor in catalysis. Lys273 acts as the Proton donor in catalysis. Residues 304 to 306, Ile309, 334 to 335, Met386, and Gly415 contribute to the S-adenosyl-L-methionine site; these read GGD and TA.

In the N-terminal section; belongs to the precorrin-2 dehydrogenase / sirohydrochlorin ferrochelatase family. The protein in the C-terminal section; belongs to the precorrin methyltransferase family.

It catalyses the reaction uroporphyrinogen III + 2 S-adenosyl-L-methionine = precorrin-2 + 2 S-adenosyl-L-homocysteine + H(+). The catalysed reaction is precorrin-2 + NAD(+) = sirohydrochlorin + NADH + 2 H(+). The enzyme catalyses siroheme + 2 H(+) = sirohydrochlorin + Fe(2+). It participates in cofactor biosynthesis; adenosylcobalamin biosynthesis; precorrin-2 from uroporphyrinogen III: step 1/1. The protein operates within cofactor biosynthesis; adenosylcobalamin biosynthesis; sirohydrochlorin from precorrin-2: step 1/1. It functions in the pathway porphyrin-containing compound metabolism; siroheme biosynthesis; precorrin-2 from uroporphyrinogen III: step 1/1. Its pathway is porphyrin-containing compound metabolism; siroheme biosynthesis; siroheme from sirohydrochlorin: step 1/1. It participates in porphyrin-containing compound metabolism; siroheme biosynthesis; sirohydrochlorin from precorrin-2: step 1/1. Its function is as follows. Multifunctional enzyme that catalyzes the SAM-dependent methylations of uroporphyrinogen III at position C-2 and C-7 to form precorrin-2 via precorrin-1. Then it catalyzes the NAD-dependent ring dehydrogenation of precorrin-2 to yield sirohydrochlorin. Finally, it catalyzes the ferrochelation of sirohydrochlorin to yield siroheme. The chain is Siroheme synthase 1 from Serratia proteamaculans (strain 568).